A 166-amino-acid polypeptide reads, in one-letter code: Small ribosomal subunit protein uS5 (166 aa).

Positions 11–74 (LIEKLVSVKR…ENAKKNMVSV (64 aa)) constitute an S5 DRBM domain.

This sequence belongs to the universal ribosomal protein uS5 family. Part of the 30S ribosomal subunit. Contacts proteins S4 and S8.

In terms of biological role, with S4 and S12 plays an important role in translational accuracy. Located at the back of the 30S subunit body where it stabilizes the conformation of the head with respect to the body. This Francisella tularensis subsp. tularensis (strain FSC 198) protein is Small ribosomal subunit protein uS5.